The primary structure comprises 199 residues: NAD(P)H dehydrogenase (quinone) (199 aa).

Residues 4-190 (ILVLYYSMYG…KIARYQGEHV (187 aa)) form the Flavodoxin-like domain. FMN-binding positions include 10 to 15 (SMYGHI) and 79 to 81 (TRF). Tyr-12 contacts NAD(+). Substrate is bound at residue Trp-99. His-134 lines the FMN pocket.

It belongs to the WrbA family. It depends on FMN as a cofactor.

The catalysed reaction is a quinone + NADH + H(+) = a quinol + NAD(+). The enzyme catalyses a quinone + NADPH + H(+) = a quinol + NADP(+). This chain is NAD(P)H dehydrogenase (quinone), found in Photorhabdus laumondii subsp. laumondii (strain DSM 15139 / CIP 105565 / TT01) (Photorhabdus luminescens subsp. laumondii).